The chain runs to 642 residues: METVVRRCPFLSRVPQAFLQKAGKSLLFYAQNCPKMMEVGAKPAPRTVSTSAAQCQQVKETPPANEKEKTAKAAVQQAPDESQMAQTPDGTQLPPGHPSPSTSQSSGSKCPFLAAQLSQTGSSVFRKASLELQEDVQEMHAVRKEVAQSPVLPSLVNAKRDGEGPSPLLKNFQDIMRKQRPERVSHLLQDNLPKSVSTFQYDHFFEKKIDEKKNDHTYRVFKTVNRRAQIFPMADDYTDSLITKKQVSVWCSNDYLGMSRHPRVCGAVIETVKQHGAGAGGTRNISGTSKFHVELEQELADLHGKDAALLFSSCFVANDSTLFTLAKMMPGCEIYSDSGNHASMIQGIRNSRVPKYIFRHNDVNHLRELLQRSDPSVPKIVAFETVHSMDGAVCPLEELCDVAHEFGAITFVDEVHAVGLYGASGGGIGDRDGVMPKMDIISGTLGKAFGCVGGYIASTSLLIDTVRSYAAGFIFTTSLPPMLLAGALESVRILKSNEGRALRRQHQRNVKLMRQMLMDAGLPVIHCPSHIIPVRVADAAKNTEICDELMTRHNIYVQAINYPTVPRGEELLRIAPTPHHTPQMMNFFLEKLLLTWKRVGLELKPHSSAECNFCRRPLHFEVMSEREKAYFSGMSKMVSAQA.

A mitochondrion-targeting transit peptide spans 1–56 (METVVRRCPFLSRVPQAFLQKAGKSLLFYAQNCPKMMEVGAKPAPRTVSTSAAQCQ). The disordered stretch occupies residues 51 to 109 (SAAQCQQVKETPPANEKEKTAKAAVQQAPDESQMAQTPDGTQLPPGHPSPSTSQSSGSK). The span at 79-90 (PDESQMAQTPDG) shows a compositional bias: polar residues. Residues 99 to 108 (SPSTSQSSGS) are compositionally biased toward low complexity. Substrate contacts are provided by R219, S336, and K355. Pyridoxal 5'-phosphate contacts are provided by S388, H416, and T444. The active site involves K447. N6-(pyridoxal phosphate)lysine is present on K447. Pyridoxal 5'-phosphate is bound by residues T476 and T477. T564 serves as a coordination point for substrate. At P578 the chain carries Hydroxyproline.

This sequence belongs to the class-II pyridoxal-phosphate-dependent aminotransferase family. Homodimer. Interacts (hydroxylated form) with VHL. The cofactor is pyridoxal 5'-phosphate. In normoxia, is hydroxylated at Pro-578, promoting interaction with VHL, initiating ubiquitination and subsequent degradation via the proteasome. Post-translationally, ubiquitinated; in normoxia following hydroxylation and interaction with VHL, leading to its subsequent degradation via the proteasome. In terms of tissue distribution, expressed in the liver, kidney, brain and testis.

It is found in the mitochondrion inner membrane. It carries out the reaction succinyl-CoA + glycine + H(+) = 5-aminolevulinate + CO2 + CoA. It participates in porphyrin-containing compound metabolism; protoporphyrin-IX biosynthesis; 5-aminolevulinate from glycine: step 1/1. Functionally, catalyzes the pyridoxal 5'-phosphate (PLP)-dependent condensation of succinyl-CoA and glycine to form aminolevulinic acid (ALA), with CoA and CO2 as by-products. The sequence is that of 5-aminolevulinate synthase, non-specific, mitochondrial (Alas1) from Rattus norvegicus (Rat).